The following is a 1516-amino-acid chain: Neurite extension and migration factor (1516 aa).

A compositionally biased stretch (basic and acidic residues) spans 380–405 (LDKKKGKEEGQEDKGVEKKDGKDNGE). 5 disordered regions span residues 380–440 (LDKK…GSFS), 589–610 (QKKK…SQKQ), 1158–1225 (TFND…STKK), 1373–1419 (TPQE…PGYN), and 1437–1479 (LGNN…ESGT). 3 stretches are compositionally biased toward polar residues: residues 596 to 610 (NTNT…SQKQ), 1158 to 1170 (TFND…STNN), and 1185 to 1194 (GAMNQSSSQK). A compositionally biased stretch (basic residues) spans 1443–1453 (THKKLYRHKSS). Residues 1456–1479 (ALRDEKCKGKHMEREQVHKDESGT) are compositionally biased toward basic and acidic residues.

In terms of tissue distribution, highly expressed in fetal and adult brain, predominantly in the cerebral cortex and the cerebellum. Also expressed in other tissues but to a lesser extent.

It is found in the nucleus. The protein resides in the cytoplasm. In terms of biological role, involved in neurite outgrowth by regulating cell-cell adhesion via the N-cadherin signaling pathway. May act by regulating expression of protein-coding genes, such as N-cadherins and integrin beta-1 (ITGB1). The sequence is that of Neurite extension and migration factor from Homo sapiens (Human).